The following is a 262-amino-acid chain: Putative hydro-lyase BLi00500/BL02808 (262 aa).

Belongs to the D-glutamate cyclase family.

This Bacillus licheniformis (strain ATCC 14580 / DSM 13 / JCM 2505 / CCUG 7422 / NBRC 12200 / NCIMB 9375 / NCTC 10341 / NRRL NRS-1264 / Gibson 46) protein is Putative hydro-lyase BLi00500/BL02808.